Here is a 2352-residue protein sequence, read N- to C-terminus: Ectopic P granules protein 5 (2352 aa).

Disordered stretches follow at residues 1–112 (MAEL…IFPR) and 1315–1335 (KNRE…SSAK). The segment covering 66–81 (DSLKREEASEPLKDVR) has biased composition (basic and acidic residues).

This sequence belongs to the EPG5 family. As to expression, expressed in pharyngeal and body wall muscles and intestine cells.

It localises to the cytoplasm. The protein resides in the cytoplasmic vesicle. It is found in the phagosome membrane. Functionally, involved in the maturation of autophagosomes into autolysosomes during starvation-induced autotrophy. Specifically, involved in the clearance of apoptotic cells by promoting the delivery of engulfed apoptotic cells to the lysosome. The sequence is that of Ectopic P granules protein 5 from Caenorhabditis elegans.